The chain runs to 222 residues: Dihydrophenazinedicarboxylate synthase (222 aa).

Ser18 contributes to the substrate binding site. Residues 73–76 (RIVV) and 88–89 (ST) contribute to the FMN site. Residue His90 participates in substrate binding. Residues 94–95 (QK) and Gln117 contribute to the FMN site. Residues Arg139 and Ser147 each contribute to the substrate site. FMN-binding positions include 152 to 153 (QS) and Arg205.

The protein belongs to the pyridoxamine 5'-phosphate oxidase family. The cofactor is FMN.

The enzyme catalyses (1R,6R)-1,4,5,5a,6,9-hexahydrophenazine-1,6-dicarboxylate + O2 = (1R,10aS)-1,4,10,10a-tetrahydrophenazine-1,6-dicarboxylate + H2O2. It catalyses the reaction (1R,10aS)-1,4,10,10a-tetrahydrophenazine-1,6-dicarboxylate + O2 = (5aS)-5,5a-dihydrophenazine-1,6-dicarboxylate + H2O2. The catalysed reaction is (1R,10aS)-1,4,10,10a-tetrahydrophenazine-1-carboxylate + O2 = (10aS)-10,10a-dihydrophenazine-1-carboxylate + H2O2. It carries out the reaction (1R)-1,4,5,10-tetrahydrophenazine-1-carboxylate + O2 = (10aS)-10,10a-dihydrophenazine-1-carboxylate + H2O2. The protein operates within antibiotic biosynthesis; phenazine biosynthesis. Involved in the biosynthesis of the antibiotic phenazine, a nitrogen-containing heterocyclic molecule having important roles in virulence, competition and biological control. Catalyzes several oxidations in the terminal steps of core phenazine biosynthesis. It oxidizes both hexahydrophenazine-1,6-dicarboxylic acid (HHPDC) and tetrahydrophenazine-1-carboxylic acid (THPCA) and thereby contributes to the generation of both phenazine-1,6-dicarboxylic acid (PDC) and phenazine-1-carboxylic acid (PCA). In Pseudomonas chlororaphis (Pseudomonas aureofaciens), this protein is Dihydrophenazinedicarboxylate synthase.